The sequence spans 143 residues: MTKAIPKIGSRRKVRIGLRRNARFSLRKSARRITKGVIHVQASFNNTIITVTDPQGRVVFWSSAGTCGFKSSRKASPYAGQRTAVDAIRTVGLQRAEVMVKGAGSGRDAALRAIAKSGVRLSCIRDVTPMPHNGCRPPKKRRL.

Belongs to the universal ribosomal protein uS11 family. Part of the 30S ribosomal subunit.

It is found in the plastid. Its subcellular location is the chloroplast. The sequence is that of Small ribosomal subunit protein uS11c from Oryza nivara (Indian wild rice).